Reading from the N-terminus, the 227-residue chain is Cytochrome c oxidase subunit 2 (227 aa).

Over 1 to 14 (MAYPVQLGFQDAAS) the chain is Mitochondrial intermembrane. Residues 15–45 (PIMEELLYFHDHTLMIMFLISSLVLYIISLM) form a helical membrane-spanning segment. Residues 46–59 (LTTELIHTSTMDAQ) are Mitochondrial matrix-facing. The chain crosses the membrane as a helical span at residues 60–87 (EVETVWTILPAVILILIALPSLRILYMM). Residues 88–227 (DEISTPSLTL…HFEEWLLSML (140 aa)) are Mitochondrial intermembrane-facing. Cu cation is bound by residues His161, Cys196, Glu198, Cys200, His204, and Met207. Glu198 contributes to the Mg(2+) binding site.

It belongs to the cytochrome c oxidase subunit 2 family. As to quaternary structure, component of the cytochrome c oxidase (complex IV, CIV), a multisubunit enzyme composed of 14 subunits. The complex is composed of a catalytic core of 3 subunits MT-CO1, MT-CO2 and MT-CO3, encoded in the mitochondrial DNA, and 11 supernumerary subunits COX4I, COX5A, COX5B, COX6A, COX6B, COX6C, COX7A, COX7B, COX7C, COX8 and NDUFA4, which are encoded in the nuclear genome. The complex exists as a monomer or a dimer and forms supercomplexes (SCs) in the inner mitochondrial membrane with NADH-ubiquinone oxidoreductase (complex I, CI) and ubiquinol-cytochrome c oxidoreductase (cytochrome b-c1 complex, complex III, CIII), resulting in different assemblies (supercomplex SCI(1)III(2)IV(1) and megacomplex MCI(2)III(2)IV(2)). Found in a complex with TMEM177, COA6, COX18, COX20, SCO1 and SCO2. Interacts with TMEM177 in a COX20-dependent manner. Interacts with COX20. Interacts with COX16. Cu cation is required as a cofactor.

The protein localises to the mitochondrion inner membrane. The enzyme catalyses 4 Fe(II)-[cytochrome c] + O2 + 8 H(+)(in) = 4 Fe(III)-[cytochrome c] + 2 H2O + 4 H(+)(out). Functionally, component of the cytochrome c oxidase, the last enzyme in the mitochondrial electron transport chain which drives oxidative phosphorylation. The respiratory chain contains 3 multisubunit complexes succinate dehydrogenase (complex II, CII), ubiquinol-cytochrome c oxidoreductase (cytochrome b-c1 complex, complex III, CIII) and cytochrome c oxidase (complex IV, CIV), that cooperate to transfer electrons derived from NADH and succinate to molecular oxygen, creating an electrochemical gradient over the inner membrane that drives transmembrane transport and the ATP synthase. Cytochrome c oxidase is the component of the respiratory chain that catalyzes the reduction of oxygen to water. Electrons originating from reduced cytochrome c in the intermembrane space (IMS) are transferred via the dinuclear copper A center (CU(A)) of subunit 2 and heme A of subunit 1 to the active site in subunit 1, a binuclear center (BNC) formed by heme A3 and copper B (CU(B)). The BNC reduces molecular oxygen to 2 water molecules using 4 electrons from cytochrome c in the IMS and 4 protons from the mitochondrial matrix. This is Cytochrome c oxidase subunit 2 (MT-CO2) from Eulemur macaco (Black lemur).